Here is a 481-residue protein sequence, read N- to C-terminus: DNA primase DnaG (481 aa).

Residues 169 to 243 (DAILVVEGRA…DVDYVARAPD (75 aa)) enclose the Toprim domain. Residues Glu175, Asp217, and Asp219 each contribute to the Mg(2+) site. Positions 275–393 (RRRNKLAAQA…ARKEREPSEF (119 aa)) are disordered. A compositionally biased stretch (low complexity) spans 281–309 (AAQAAEKQAQAEAAQKAEAPAAAAPVQPQ). A compositionally biased stretch (basic and acidic residues) spans 312 to 393 (YQQKEYPQRE…ARKEREPSEF (82 aa)).

This sequence belongs to the archaeal DnaG primase family. In terms of assembly, forms a ternary complex with MCM helicase and DNA. Component of the archaeal exosome complex. Mg(2+) serves as cofactor.

It catalyses the reaction ssDNA + n NTP = ssDNA/pppN(pN)n-1 hybrid + (n-1) diphosphate.. Functionally, RNA polymerase that catalyzes the synthesis of short RNA molecules used as primers for DNA polymerase during DNA replication. Also part of the exosome, which is a complex involved in RNA degradation. Acts as a poly(A)-binding protein that enhances the interaction between heteromeric, adenine-rich transcripts and the exosome. The polypeptide is DNA primase DnaG (Methanocella arvoryzae (strain DSM 22066 / NBRC 105507 / MRE50)).